The primary structure comprises 235 residues: Regulator of G-protein signaling 18 (235 aa).

The residue at position 49 (Ser-49) is a Phosphoserine. In terms of domain architecture, RGS spans 86–202 (SFDKLLSHRD…LKSEIYLHLI (117 aa)). 2 positions are modified to phosphoserine: Ser-216 and Ser-218.

It is found in the cytoplasm. Its function is as follows. Inhibits signal transduction by increasing the GTPase activity of G protein alpha subunits thereby driving them into their inactive GDP-bound form. Binds to G(i) alpha-1, G(i) alpha-2, G(i) alpha-3 and G(q) alpha. The sequence is that of Regulator of G-protein signaling 18 (Rgs18) from Rattus norvegicus (Rat).